A 127-amino-acid chain; its full sequence is Aspartate 1-decarboxylase (127 aa).

Catalysis depends on Ser-25, which acts as the Schiff-base intermediate with substrate; via pyruvic acid. Ser-25 bears the Pyruvic acid (Ser) mark. Position 57 (Thr-57) interacts with substrate. Catalysis depends on Tyr-58, which acts as the Proton donor. 73 to 75 lines the substrate pocket; it reads GAA.

It belongs to the PanD family. In terms of assembly, heterooctamer of four alpha and four beta subunits. It depends on pyruvate as a cofactor. Post-translationally, is synthesized initially as an inactive proenzyme, which is activated by self-cleavage at a specific serine bond to produce a beta-subunit with a hydroxyl group at its C-terminus and an alpha-subunit with a pyruvoyl group at its N-terminus.

The protein resides in the cytoplasm. It carries out the reaction L-aspartate + H(+) = beta-alanine + CO2. It functions in the pathway cofactor biosynthesis; (R)-pantothenate biosynthesis; beta-alanine from L-aspartate: step 1/1. Its function is as follows. Catalyzes the pyruvoyl-dependent decarboxylation of aspartate to produce beta-alanine. The chain is Aspartate 1-decarboxylase from Clostridium botulinum (strain Okra / Type B1).